We begin with the raw amino-acid sequence, 359 residues long: Peptide chain release factor 1 (359 aa).

The residue at position 233 (glutamine 233) is an N5-methylglutamine.

The protein belongs to the prokaryotic/mitochondrial release factor family. Post-translationally, methylated by PrmC. Methylation increases the termination efficiency of RF1.

The protein resides in the cytoplasm. In terms of biological role, peptide chain release factor 1 directs the termination of translation in response to the peptide chain termination codons UAG and UAA. The sequence is that of Peptide chain release factor 1 from Orientia tsutsugamushi (strain Boryong) (Rickettsia tsutsugamushi).